A 186-amino-acid polypeptide reads, in one-letter code: Peptide deformylase (186 aa).

Cys-99 and His-141 together coordinate Fe cation. Residue Glu-142 is part of the active site. Residue His-145 participates in Fe cation binding.

This sequence belongs to the polypeptide deformylase family. Fe(2+) serves as cofactor.

The enzyme catalyses N-terminal N-formyl-L-methionyl-[peptide] + H2O = N-terminal L-methionyl-[peptide] + formate. Its function is as follows. Removes the formyl group from the N-terminal Met of newly synthesized proteins. Requires at least a dipeptide for an efficient rate of reaction. N-terminal L-methionine is a prerequisite for activity but the enzyme has broad specificity at other positions. The sequence is that of Peptide deformylase from Chlamydia pneumoniae (Chlamydophila pneumoniae).